Reading from the N-terminus, the 212-residue chain is 3-demethoxyubiquinol 3-hydroxylase (212 aa).

The disordered stretch occupies residues 21-42 (SRMSRPLPVPQESAVTEAAPEL). Residues E61, E91, H94, E143, E175, and H178 each coordinate Fe cation.

It belongs to the COQ7 family. Fe cation serves as cofactor.

It localises to the cell membrane. It catalyses the reaction a 5-methoxy-2-methyl-3-(all-trans-polyprenyl)benzene-1,4-diol + AH2 + O2 = a 3-demethylubiquinol + A + H2O. It functions in the pathway cofactor biosynthesis; ubiquinone biosynthesis. Its function is as follows. Catalyzes the hydroxylation of 2-nonaprenyl-3-methyl-6-methoxy-1,4-benzoquinol during ubiquinone biosynthesis. In Paraburkholderia xenovorans (strain LB400), this protein is 3-demethoxyubiquinol 3-hydroxylase.